A 284-amino-acid polypeptide reads, in one-letter code: Proteasome subunit beta 1 (284 aa).

A propeptide spans 1–54 (MAQRDTGGRLGAEFFTPGDSSFTAFLAAHRPALLSTRGLLPDGVRAAPDRVPHG) (removed in mature form; by autocatalysis). The active-site Nucleophile is Thr55. Over residues 256 to 277 (RLPESETEDLSREMVEQRHTRP) the composition is skewed to basic and acidic residues. Positions 256–284 (RLPESETEDLSREMVEQRHTRPDGPTAAM) are disordered.

The protein belongs to the peptidase T1B family. As to quaternary structure, the 20S proteasome core is composed of 14 alpha and 14 beta subunits that assemble into four stacked heptameric rings, resulting in a barrel-shaped structure. The two inner rings, each composed of seven catalytic beta subunits, are sandwiched by two outer rings, each composed of seven alpha subunits. The catalytic chamber with the active sites is on the inside of the barrel. Has a gated structure, the ends of the cylinder being occluded by the N-termini of the alpha-subunits. Is capped by the proteasome-associated ATPase, ARC.

It localises to the cytoplasm. It carries out the reaction Cleavage of peptide bonds with very broad specificity.. It functions in the pathway protein degradation; proteasomal Pup-dependent pathway. Its activity is regulated as follows. The formation of the proteasomal ATPase ARC-20S proteasome complex, likely via the docking of the C-termini of ARC into the intersubunit pockets in the alpha-rings, may trigger opening of the gate for substrate entry. Interconversion between the open-gate and close-gate conformations leads to a dynamic regulation of the 20S proteasome proteolysis activity. In terms of biological role, component of the proteasome core, a large protease complex with broad specificity involved in protein degradation. The chain is Proteasome subunit beta 1 from Streptomyces avermitilis (strain ATCC 31267 / DSM 46492 / JCM 5070 / NBRC 14893 / NCIMB 12804 / NRRL 8165 / MA-4680).